The sequence spans 70 residues: DNA-directed RNA polymerase subunit omega (70 aa).

The protein belongs to the RNA polymerase subunit omega family. As to quaternary structure, the RNAP catalytic core consists of 2 alpha, 1 beta, 1 beta' and 1 omega subunit. When a sigma factor is associated with the core the holoenzyme is formed, which can initiate transcription.

It catalyses the reaction RNA(n) + a ribonucleoside 5'-triphosphate = RNA(n+1) + diphosphate. Its function is as follows. Promotes RNA polymerase assembly. Latches the N- and C-terminal regions of the beta' subunit thereby facilitating its interaction with the beta and alpha subunits. This chain is DNA-directed RNA polymerase subunit omega, found in Clostridium perfringens (strain ATCC 13124 / DSM 756 / JCM 1290 / NCIMB 6125 / NCTC 8237 / Type A).